The following is a 271-amino-acid chain: Formamidopyrimidine-DNA glycosylase (271 aa).

Pro2 functions as the Schiff-base intermediate with DNA in the catalytic mechanism. The active-site Proton donor is Glu3. The active-site Proton donor; for beta-elimination activity is the Lys57. DNA-binding residues include His90, Arg109, and Lys151. An FPG-type zinc finger spans residues 236 to 270 (HVYGRGGETCTSCGNLLSEIRLGQRTTVFCGICQT). Catalysis depends on Arg260, which acts as the Proton donor; for delta-elimination activity.

It belongs to the FPG family. As to quaternary structure, monomer. Requires Zn(2+) as cofactor.

The catalysed reaction is Hydrolysis of DNA containing ring-opened 7-methylguanine residues, releasing 2,6-diamino-4-hydroxy-5-(N-methyl)formamidopyrimidine.. The enzyme catalyses 2'-deoxyribonucleotide-(2'-deoxyribose 5'-phosphate)-2'-deoxyribonucleotide-DNA = a 3'-end 2'-deoxyribonucleotide-(2,3-dehydro-2,3-deoxyribose 5'-phosphate)-DNA + a 5'-end 5'-phospho-2'-deoxyribonucleoside-DNA + H(+). Its function is as follows. Involved in base excision repair of DNA damaged by oxidation or by mutagenic agents. Acts as a DNA glycosylase that recognizes and removes damaged bases. Has a preference for oxidized purines, such as 7,8-dihydro-8-oxoguanine (8-oxoG). Has AP (apurinic/apyrimidinic) lyase activity and introduces nicks in the DNA strand. Cleaves the DNA backbone by beta-delta elimination to generate a single-strand break at the site of the removed base with both 3'- and 5'-phosphates. The sequence is that of Formamidopyrimidine-DNA glycosylase from Shewanella baltica (strain OS155 / ATCC BAA-1091).